Here is a 594-residue protein sequence, read N- to C-terminus: Probable translation initiation factor IF-2 (594 aa).

Residues 3–220 (IRSPIVSVLG…MLMGLAQQYL (218 aa)) form the tr-type G domain. The G1 stretch occupies residues 12-19 (GHVDHGKT). 12-19 (GHVDHGKT) serves as a coordination point for GTP. A G2 region spans residues 37–41 (GITQH). The tract at residues 76 to 79 (DTPG) is G3. GTP-binding positions include 76 to 80 (DTPGH) and 130 to 133 (NKID). The G4 stretch occupies residues 130-133 (NKID). The G5 stretch occupies residues 198–200 (SAI).

Belongs to the TRAFAC class translation factor GTPase superfamily. Classic translation factor GTPase family. IF-2 subfamily.

Its function is as follows. Function in general translation initiation by promoting the binding of the formylmethionine-tRNA to ribosomes. Seems to function along with eIF-2. This is Probable translation initiation factor IF-2 (infB) from Methanothermobacter thermautotrophicus (strain ATCC 29096 / DSM 1053 / JCM 10044 / NBRC 100330 / Delta H) (Methanobacterium thermoautotrophicum).